A 184-amino-acid polypeptide reads, in one-letter code: Ras-related protein Rap-1b (184 aa).

Residue 10–18 participates in GTP binding; it reads GSGGVGKSA. Residues 25–67 are interaction with KRIT1; it reads QGIFVEKYDPTIEDSYRKQVEVDAQQCMLEILDTAGTEQFTAM. The Effector region motif lies at 32-40; that stretch reads YDPTIEDSY. GTP is bound by residues 57-61, 116-119, and 147-149; these read DTAGT, NKCD, and SAK. Residue Ser-179 is modified to Phosphoserine; by PKA. Cys-181 carries the cysteine methyl ester modification. The S-geranylgeranyl cysteine moiety is linked to residue Cys-181. Residues 182 to 184 constitute a propeptide, removed in mature form; the sequence is QLL.

In terms of assembly, heterodimer with RAP1GAP. Interacts with EPAC2. Interacts with SGSM1. Interacts with SGSM2. Interacts with SGSM3. Interacts with KRIT1. Interacts with RAP1GDS1.

Its subcellular location is the cell membrane. The protein resides in the cytoplasm. It is found in the cytosol. The protein localises to the cell junction. It carries out the reaction GTP + H2O = GDP + phosphate + H(+). Activated by guanine nucleotide-exchange factor (GEF) EPAC2 in a cAMP-dependent manner. In terms of biological role, GTP-binding protein that possesses intrinsic GTPase activity. Contributes to the polarizing activity of KRIT1 and CDH5 in the establishment and maintenance of correct endothelial cell polarity and vascular lumen. Required for the localization of phosphorylated PRKCZ, PARD3 and TIAM1 to the cell junction. Plays a role in the establishment of basal endothelial barrier function. The chain is Ras-related protein Rap-1b (RAP1B) from Bos taurus (Bovine).